The sequence spans 156 residues: RNA pyrophosphohydrolase (156 aa).

In terms of domain architecture, Nudix hydrolase spans 6–148; sequence NYRPNVAAIV…KKNIYVKVIK (143 aa). The short motif at 43–64 is the Nudix box element; the sequence is GGIDKGESVKNALFRELKEEIG.

Belongs to the Nudix hydrolase family. RppH subfamily. A divalent metal cation is required as a cofactor.

Its function is as follows. Accelerates the degradation of transcripts by removing pyrophosphate from the 5'-end of triphosphorylated RNA, leading to a more labile monophosphorylated state that can stimulate subsequent ribonuclease cleavage. This chain is RNA pyrophosphohydrolase, found in Campylobacter jejuni subsp. jejuni serotype O:6 (strain 81116 / NCTC 11828).